The chain runs to 151 residues: Transcriptional repressor NrdR (151 aa).

Residues 3-34 fold into a zinc finger; that stretch reads CPHCGNCDDKVMESRTLAQGDCIRRRRECLAC. In terms of domain architecture, ATP-cone spans 49-141; it reads FMVIKKDGRR…VYKQFSNLDE (93 aa).

Belongs to the NrdR family. Zn(2+) is required as a cofactor.

In terms of biological role, negatively regulates transcription of bacterial ribonucleotide reductase nrd genes and operons by binding to NrdR-boxes. The sequence is that of Transcriptional repressor NrdR from Treponema denticola (strain ATCC 35405 / DSM 14222 / CIP 103919 / JCM 8153 / KCTC 15104).